A 430-amino-acid polypeptide reads, in one-letter code: Adenylosuccinate synthetase (430 aa).

GTP contacts are provided by residues 12 to 18 (GDEGKGK) and 40 to 42 (GHT). D13 serves as the catalytic Proton acceptor. Residues D13 and G40 each coordinate Mg(2+). IMP is bound by residues 13–16 (DEGK), 38–41 (NAGH), T130, R144, Q225, T240, and R304. H41 acts as the Proton donor in catalysis. 300-306 (STTGRPR) provides a ligand contact to substrate. GTP contacts are provided by residues R306, 332-334 (KLD), and 414-416 (SVG).

It belongs to the adenylosuccinate synthetase family. As to quaternary structure, homodimer. Mg(2+) serves as cofactor.

The protein localises to the cytoplasm. It carries out the reaction IMP + L-aspartate + GTP = N(6)-(1,2-dicarboxyethyl)-AMP + GDP + phosphate + 2 H(+). The protein operates within purine metabolism; AMP biosynthesis via de novo pathway; AMP from IMP: step 1/2. In terms of biological role, plays an important role in the de novo pathway of purine nucleotide biosynthesis. Catalyzes the first committed step in the biosynthesis of AMP from IMP. This chain is Adenylosuccinate synthetase, found in Pelobacter propionicus (strain DSM 2379 / NBRC 103807 / OttBd1).